A 139-amino-acid chain; its full sequence is Invertebrate-type lysozyme 3 (139 aa).

The N-terminal stretch at 1–18 is a signal peptide; the sequence is MFVKSLVFLTIAVAYASA. Residues 19 to 138 enclose the I-type lysozyme domain; that stretch reads DCLHCICMRE…WNGIKSCCGC (120 aa). Disulfide bonds link C20–C106, C23–C138, C25–C31, C36–C45, C58–C86, C76–C82, and C98–C120. E28 functions as the Proton donor in the catalytic mechanism. D39 acts as the Nucleophile in catalysis. 51-57 is a binding site for substrate; it reads KLPYYED. Residues Y90 and 113–115 contribute to the substrate site; that span reads HNG.

The protein belongs to the glycosyl hydrolase 22 family. Type-I lysozyme subfamily. As to expression, expressed in pharynx grinder muscle pm7, isthmus marginal cell mc2 and pharyngeal muscle cell pm5, intestinal cells and at lower levels in coelomocytes and epidermis. Expressed at low levels in intestine.

The protein localises to the late endosome lumen. The protein resides in the recycling endosome lumen. Its subcellular location is the lysosome lumen. It localises to the secreted. The catalysed reaction is Hydrolysis of (1-&gt;4)-beta-linkages between N-acetylmuramic acid and N-acetyl-D-glucosamine residues in a peptidoglycan and between N-acetyl-D-glucosamine residues in chitodextrins.. Functionally, has bacteriolytic activity against Gram-positive bacteria. Plays a role in defense against bacterial pathogens. Involved in pharyngeal grinder function by enabling proper lysis of ingested bacteria. The sequence is that of Invertebrate-type lysozyme 3 from Caenorhabditis elegans.